A 527-amino-acid polypeptide reads, in one-letter code: Catalase (527 aa).

N-acetylalanine is present on Ala2. Ser9 is modified (phosphoserine). Lys13 carries the N6-succinyllysine modification. Residues His75 and Asn148 contribute to the active site. NADP(+) is bound by residues His194, Ser201, Arg203, and Asn213. An N6-succinyllysine modification is found at Lys221. Lys233 is modified (N6-acetyllysine). NADP(+) contacts are provided by Lys237, Trp303, His305, and Lys306. N6-acetyllysine; alternate is present on Lys306. N6-succinyllysine; alternate is present on Lys306. Tyr358 contacts heme. A phosphoserine mark is found at Ser417 and Ser422. Lys480 bears the N6-acetyllysine; alternate mark. The residue at position 480 (Lys480) is an N6-succinyllysine; alternate. Lys499 is modified (N6-acetyllysine). A Phosphothreonine modification is found at Thr511. Phosphoserine is present on residues Ser515 and Ser517. Residues 524 to 527 (KANL) carry the Microbody targeting signal; atypical motif.

The protein belongs to the catalase family. As to quaternary structure, homotetramer. Interacts (via microbody targeting signal) with PEX5, monomeric form interacts with PEX5, leading to its translocation into peroxisomes. Heme serves as cofactor. Requires NADP(+) as cofactor.

The protein localises to the peroxisome matrix. It carries out the reaction 2 H2O2 = O2 + 2 H2O. Catalyzes the degradation of hydrogen peroxide (H(2)O(2)) generated by peroxisomal oxidases to water and oxygen, thereby protecting cells from the toxic effects of hydrogen peroxide. Promotes growth of cells including T-cells, B-cells, myeloid leukemia cells, melanoma cells, mastocytoma cells and normal and transformed fibroblast cells. The chain is Catalase (CAT) from Pongo abelii (Sumatran orangutan).